A 190-amino-acid polypeptide reads, in one-letter code: Proline-rich protein 3 (190 aa).

3 disordered regions span residues 1 to 94 (MPKR…GLGP), 110 to 130 (PPFP…KEAR), and 142 to 161 (KNTY…SDRP). The span at 37 to 48 (MGPPSLLGPPPM) shows a compositional bias: pro residues. The segment at 157–185 (KSDRPVCRHFSKKGHCRYEDHCAFYHPGV) adopts a C3H1-type zinc-finger fold.

The chain is Proline-rich protein 3 (Prr3) from Mus musculus (Mouse).